The primary structure comprises 129 residues: D-ribose pyranase 2 (129 aa).

The Proton donor role is filled by His-20. Substrate is bound by residues Asp-28, His-96, and 118–120 (YAN).

It belongs to the RbsD / FucU family. RbsD subfamily. As to quaternary structure, homodecamer.

The protein localises to the cytoplasm. The catalysed reaction is beta-D-ribopyranose = beta-D-ribofuranose. The protein operates within carbohydrate metabolism; D-ribose degradation; D-ribose 5-phosphate from beta-D-ribopyranose: step 1/2. In terms of biological role, catalyzes the interconversion of beta-pyran and beta-furan forms of D-ribose. The sequence is that of D-ribose pyranase 2 from Streptomyces griseus subsp. griseus (strain JCM 4626 / CBS 651.72 / NBRC 13350 / KCC S-0626 / ISP 5235).